A 553-amino-acid polypeptide reads, in one-letter code: Dihydroxy-acid dehydratase (553 aa).

Asp-78 is a binding site for Mg(2+). Cys-119 is a binding site for [2Fe-2S] cluster. Asp-120 and Lys-121 together coordinate Mg(2+). At Lys-121 the chain carries N6-carboxylysine. Cys-193 serves as a coordination point for [2Fe-2S] cluster. Glu-441 is a binding site for Mg(2+). The active-site Proton acceptor is Ser-467.

Belongs to the IlvD/Edd family. In terms of assembly, homodimer. [2Fe-2S] cluster serves as cofactor. The cofactor is Mg(2+).

The catalysed reaction is (2R)-2,3-dihydroxy-3-methylbutanoate = 3-methyl-2-oxobutanoate + H2O. The enzyme catalyses (2R,3R)-2,3-dihydroxy-3-methylpentanoate = (S)-3-methyl-2-oxopentanoate + H2O. The protein operates within amino-acid biosynthesis; L-isoleucine biosynthesis; L-isoleucine from 2-oxobutanoate: step 3/4. Its pathway is amino-acid biosynthesis; L-valine biosynthesis; L-valine from pyruvate: step 3/4. In terms of biological role, functions in the biosynthesis of branched-chain amino acids. Catalyzes the dehydration of (2R,3R)-2,3-dihydroxy-3-methylpentanoate (2,3-dihydroxy-3-methylvalerate) into 2-oxo-3-methylpentanoate (2-oxo-3-methylvalerate) and of (2R)-2,3-dihydroxy-3-methylbutanoate (2,3-dihydroxyisovalerate) into 2-oxo-3-methylbutanoate (2-oxoisovalerate), the penultimate precursor to L-isoleucine and L-valine, respectively. This is Dihydroxy-acid dehydratase from Pelobacter propionicus (strain DSM 2379 / NBRC 103807 / OttBd1).